The following is a 295-amino-acid chain: NAD kinase (295 aa).

Catalysis depends on Asp-74, which acts as the Proton acceptor. NAD(+) is bound by residues 74-75 (DG), 148-149 (ND), His-159, Arg-176, Asp-178, and 189-194 (TAYALS).

This sequence belongs to the NAD kinase family. A divalent metal cation serves as cofactor.

The protein resides in the cytoplasm. It carries out the reaction NAD(+) + ATP = ADP + NADP(+) + H(+). In terms of biological role, involved in the regulation of the intracellular balance of NAD and NADP, and is a key enzyme in the biosynthesis of NADP. Catalyzes specifically the phosphorylation on 2'-hydroxyl of the adenosine moiety of NAD to yield NADP. This is NAD kinase from Legionella pneumophila (strain Paris).